A 1272-amino-acid polypeptide reads, in one-letter code: Myosin-binding protein C, cardiac-type (1272 aa).

The disordered stretch occupies residues 95-147 (KEPEKSEPVAPAEASPAPAASELPAPPVESNQNPEVPPAETQPEEPVDPIGLF). Low complexity predominate over residues 102–117 (PVAPAEASPAPAASEL). One can recognise an Ig-like C2-type 1 domain in the interval 137-252 (PEEPVDPIGL…NLIVNEAPVS (116 aa)). Phosphoserine; by PKA and PKC is present on serine 265. At threonine 274 the chain carries Phosphothreonine; by PKA and PKC. Serine 300 is subject to Phosphoserine; by PKA. 4 Ig-like C2-type domains span residues 359 to 451 (KKST…VKEP), 452 to 542 (PILI…VQEK), 543 to 640 (KLEV…FVPR), and 644 to 763 (PKIH…ADIT). Fibronectin type-III domains lie at 772–868 (PPEA…IAPP) and 870–965 (EPTH…VQEI). The region spanning 969–1057 (PKICVPRHLR…ENMTDTVAIT (89 aa)) is the Ig-like C2-type 6 domain. In terms of domain architecture, Fibronectin type-III 3 spans 1066 to 1161 (PPQNIKLADV…TKNPAYIQKT (96 aa)). At serine 1169 the chain carries Phosphoserine; by PKC. The Ig-like C2-type 7 domain occupies 1179-1263 (PKFTHPLVNR…VNERGEAEIE (85 aa)).

This sequence belongs to the immunoglobulin superfamily. MyBP family. Substrate for phosphorylation by PKA and PKC. Reversible phosphorylation appears to modulate contraction. As to expression, expressed specifically in cardiac muscle among adult tissues, but is also expressed transiently in the skeletal muscle at early developmental stages. Isoform Type I is found in embryonic skeletal muscle and isoform Type II is found in both embryonic skeletal and cardiac muscle.

Its function is as follows. Thick filament-associated protein located in the crossbridge region of vertebrate striated muscle A bands. In vitro it binds MHC, F-actin and native thin filaments, and modifies the activity of actin-activated myosin ATPase. It may modulate muscle contraction or may play a more structural role. May be involved in the early phase of myofibrillogenesis. In Gallus gallus (Chicken), this protein is Myosin-binding protein C, cardiac-type (MYBPC3).